Consider the following 430-residue polypeptide: MLYEKFEHNINNLIGGFGLSKIAIAVSGGSDSVALLYLANIWAKKNNIELFVLSVDHNLRDQSKQEIEYIQNTANDLGLKFYSLFFDHQNNFSNLQERARKGRYDLMTSLCQKLDILVLLTAHHEDDYIENFCLRLERKSGVFGLSSSSVNWHNNTQIIRPLFNIPKSELVNYLATNNIKWFEDQSNLSTKYRRNTIRQKLAKEEVYIKDDIITQQIKVNELIENKFKPELISAIAESVKISEYGFAFLDLIKFSGFSQEVRVQLINFLLIIISGQQRSARFYSVEPILKLIRQSLDFKNTLHGCVIKRMQNKLLIYREFGKKLPESKLLLDKQLVWDNRFRITKNHNIENCVATYLSLEDYKIIKEKLDLEVLKNLSCGNHNAILFTLPIVKILEKVVAIPHISYYDNDIKSFNVSFAPDFTSRFTHFY.

An ATP-binding site is contributed by 27-32 (SGGSDS).

The protein belongs to the tRNA(Ile)-lysidine synthase family.

It localises to the cytoplasm. The catalysed reaction is cytidine(34) in tRNA(Ile2) + L-lysine + ATP = lysidine(34) in tRNA(Ile2) + AMP + diphosphate + H(+). Its function is as follows. Ligates lysine onto the cytidine present at position 34 of the AUA codon-specific tRNA(Ile) that contains the anticodon CAU, in an ATP-dependent manner. Cytidine is converted to lysidine, thus changing the amino acid specificity of the tRNA from methionine to isoleucine. The polypeptide is tRNA(Ile)-lysidine synthase (Rickettsia bellii (strain RML369-C)).